Reading from the N-terminus, the 464-residue chain is Bifunctional protein GlmU (464 aa).

A pyrophosphorylase region spans residues methionine 1–proline 231. UDP-N-acetyl-alpha-D-glucosamine contacts are provided by residues lysine 20, glutamine 78, glycine 83–threonine 84, serine 105–aspartate 107, glycine 142, glutamate 156, and asparagine 229. Mg(2+) is bound at residue aspartate 107. Asparagine 229 is a binding site for Mg(2+). The tract at residues valine 232 to glutamine 252 is linker. Positions glycine 253 to lysine 464 are N-acetyltransferase. Residues arginine 343 and lysine 361 each coordinate UDP-N-acetyl-alpha-D-glucosamine. Residue histidine 373 is the Proton acceptor of the active site. Residues tyrosine 376 and asparagine 387 each coordinate UDP-N-acetyl-alpha-D-glucosamine. Residues alanine 390, asparagine 396–tyrosine 397, serine 415, glycine 433, and arginine 450 each bind acetyl-CoA.

It in the N-terminal section; belongs to the N-acetylglucosamine-1-phosphate uridyltransferase family. This sequence in the C-terminal section; belongs to the transferase hexapeptide repeat family. Homotrimer. Mg(2+) is required as a cofactor.

The protein localises to the cytoplasm. The enzyme catalyses alpha-D-glucosamine 1-phosphate + acetyl-CoA = N-acetyl-alpha-D-glucosamine 1-phosphate + CoA + H(+). The catalysed reaction is N-acetyl-alpha-D-glucosamine 1-phosphate + UTP + H(+) = UDP-N-acetyl-alpha-D-glucosamine + diphosphate. It participates in nucleotide-sugar biosynthesis; UDP-N-acetyl-alpha-D-glucosamine biosynthesis; N-acetyl-alpha-D-glucosamine 1-phosphate from alpha-D-glucosamine 6-phosphate (route II): step 2/2. Its pathway is nucleotide-sugar biosynthesis; UDP-N-acetyl-alpha-D-glucosamine biosynthesis; UDP-N-acetyl-alpha-D-glucosamine from N-acetyl-alpha-D-glucosamine 1-phosphate: step 1/1. It functions in the pathway bacterial outer membrane biogenesis; LPS lipid A biosynthesis. Its function is as follows. Catalyzes the last two sequential reactions in the de novo biosynthetic pathway for UDP-N-acetylglucosamine (UDP-GlcNAc). The C-terminal domain catalyzes the transfer of acetyl group from acetyl coenzyme A to glucosamine-1-phosphate (GlcN-1-P) to produce N-acetylglucosamine-1-phosphate (GlcNAc-1-P), which is converted into UDP-GlcNAc by the transfer of uridine 5-monophosphate (from uridine 5-triphosphate), a reaction catalyzed by the N-terminal domain. The protein is Bifunctional protein GlmU of Albidiferax ferrireducens (strain ATCC BAA-621 / DSM 15236 / T118) (Rhodoferax ferrireducens).